Consider the following 295-residue polypeptide: Glutamyl-Q tRNA(Asp) synthetase (295 aa).

L-glutamate is bound by residues 9–13 (RFAPT) and glutamate 45. Residues 12-22 (PTPSGFLHFGS) carry the 'HIGH' region motif. Residues cysteine 101, cysteine 103, tyrosine 115, and cysteine 119 each coordinate Zn(2+). Residues tyrosine 172 and arginine 190 each contribute to the L-glutamate site. The 'KMSKS' region signature appears at 228-232 (KLGKS). Position 231 (lysine 231) interacts with ATP.

The protein belongs to the class-I aminoacyl-tRNA synthetase family. GluQ subfamily. Zn(2+) serves as cofactor.

Its function is as follows. Catalyzes the tRNA-independent activation of glutamate in presence of ATP and the subsequent transfer of glutamate onto a tRNA(Asp). Glutamate is transferred on the 2-amino-5-(4,5-dihydroxy-2-cyclopenten-1-yl) moiety of the queuosine in the wobble position of the QUC anticodon. The polypeptide is Glutamyl-Q tRNA(Asp) synthetase (Pseudomonas entomophila (strain L48)).